The primary structure comprises 777 residues: DnaJ homolog subfamily C member 16 (777 aa).

The first 23 residues, 1-23 (MELGRAGPAGLLLLLLLLLAAQA), serve as a signal peptide directing secretion. Topologically, residues 24–531 (APERDPYRVL…DSLFHSNWRE (508 aa)) are cytoplasmic. Positions 28–92 (DPYRVLGVGR…EKRANFDRYG (65 aa)) constitute a J domain. One can recognise a Thioredoxin domain in the interval 117–243 (FDESFFHFPF…LRQFVENLLP (127 aa)). Residues 532 to 552 (MMPLLSLLFSALFILFGTVIV) form a helical; Anchor for type IV membrane protein membrane-spanning segment. Residues 553–777 (QAFSDSSDTR…FYIPSWPALD (225 aa)) lie on the Extracellular side of the membrane. Residues 558-589 (SSDTRDSPASEKKDTTAKTEKNDTSFNKESNS) are disordered. Basic and acidic residues predominate over residues 559 to 580 (SDTRDSPASEKKDTTAKTEKND). N627 carries an N-linked (GlcNAc...) asparagine glycan.

Its subcellular location is the endoplasmic reticulum membrane. Plays an important role in regulating the size of autophagosomes during the formation process. The polypeptide is DnaJ homolog subfamily C member 16 (DNAJC16) (Gallus gallus (Chicken)).